Reading from the N-terminus, the 63-residue chain is MSDRQTQIPAGGGREDDHDDQVQSAGQVQVNTEGVDDLLDEIDGLLENNAEEFVRSYVQKGGE.

Residues 1–28 (MSDRQTQIPAGGGREDDHDDQVQSAGQV) form a disordered region. Residues 19–57 (DDQVQSAGQVQVNTEGVDDLLDEIDGLLENNAEEFVRSY) form an ARC ATPase binding region. Residue Glu63 forms an Isoglutamyl lysine isopeptide (Glu-Lys) (interchain with K-? in acceptor proteins) linkage.

It belongs to the prokaryotic ubiquitin-like protein family. In terms of assembly, strongly interacts with the proteasome-associated ATPase ARC through a hydrophobic interface; the interacting region of Pup lies in its C-terminal half. There is one Pup binding site per ARC hexamer ring.

It functions in the pathway protein degradation; proteasomal Pup-dependent pathway. In terms of biological role, protein modifier that is covalently attached to lysine residues of substrate proteins, thereby targeting them for proteasomal degradation. The tagging system is termed pupylation. The sequence is that of Prokaryotic ubiquitin-like protein Pup from Corynebacterium efficiens (strain DSM 44549 / YS-314 / AJ 12310 / JCM 11189 / NBRC 100395).